Consider the following 143-residue polypeptide: Histone H2B.2, sperm (143 aa).

The tract at residues 1 to 49 is disordered; the sequence is MPKSPSKSSPRKGSPRKGSPRKGSPKRGGKGAKRAGKGGRRNVVKRRRR. 5 short sequence motifs (SPKK motif) span residues 4-7, 9-12, 14-17, 19-22, and 24-27; these read SPSK, SPRK, and SPKR. Residues 9–49 show a composition bias toward basic residues; sequence SPRKGSPRKGSPRKGSPKRGGKGAKRAGKGGRRNVVKRRRR. 3 positions are modified to phosphoserine: serine 14, serine 19, and serine 24. An O-linked (GlcNAc) serine glycan is attached at serine 129. Lysine 137 is covalently cross-linked (Glycyl lysine isopeptide (Lys-Gly) (interchain with G-Cter in ubiquitin)).

This sequence belongs to the histone H2B family. The nucleosome is a histone octamer containing two molecules each of H2A, H2B, H3 and H4 assembled in one H3-H4 heterotetramer and two H2A-H2B heterodimers. The octamer wraps approximately 147 bp of DNA. In terms of processing, monoubiquitination of Lys-137 gives a specific tag for epigenetic transcriptional activation and is also prerequisite for histone H3 'Lys-4' and 'Lys-79' methylation. Phosphorylated on SPKK motifs 3, 4 and 5; which may regulate DNA binding. Dephosphorylated during maturation of spermatids to mature sperm and rephosphorylated at fertilization. Post-translationally, glcNAcylation at Ser-129 promotes monoubiquitination of Lys-137. It fluctuates in response to extracellular glucose, and associates with transcribed genes.

The protein localises to the nucleus. It is found in the chromosome. Its function is as follows. Core component of nucleosome. Nucleosomes wrap and compact DNA into chromatin, limiting DNA accessibility to the cellular machineries which require DNA as a template. Histones thereby play a central role in transcription regulation, DNA repair, DNA replication and chromosomal stability. DNA accessibility is regulated via a complex set of post-translational modifications of histones, also called histone code, and nucleosome remodeling. The polypeptide is Histone H2B.2, sperm (Psammechinus miliaris (Green sea urchin)).